Reading from the N-terminus, the 468-residue chain is Trigger factor (468 aa).

Residues 162–243 enclose the PPIase FKBP-type domain; sequence GDVLTLDLQA…VSQVAARELP (82 aa). Residues 428 to 468 are disordered; the sequence is NGEIVDLDDEEDEETEAAEADATEAADAEKADDKAEEKTEG. Acidic residues predominate over residues 432-453; sequence VDLDDEEDEETEAAEADATEAA. Basic and acidic residues predominate over residues 454 to 468; the sequence is DAEKADDKAEEKTEG.

It belongs to the FKBP-type PPIase family. Tig subfamily.

The protein resides in the cytoplasm. It catalyses the reaction [protein]-peptidylproline (omega=180) = [protein]-peptidylproline (omega=0). Involved in protein export. Acts as a chaperone by maintaining the newly synthesized protein in an open conformation. Functions as a peptidyl-prolyl cis-trans isomerase. The chain is Trigger factor from Streptomyces coelicolor (strain ATCC BAA-471 / A3(2) / M145).